The chain runs to 343 residues: Dual oxidase maturation factor 1 (343 aa).

Residues 1–24 (MATLGHTFPFYAGPKPTFPMDTTL) are Extracellular-facing. Residues 25 to 45 (ASIIMIFLTALATFIVILPGI) form a helical membrane-spanning segment. The Cytoplasmic portion of the chain corresponds to 46 to 51 (RGKTRL). The chain crosses the membrane as a helical span at residues 52–72 (FWLLRVVTSLFIGAAILAVNF). The Extracellular segment spans residues 73-183 (SSEWSVGQVS…RLAGHYTSAM (111 aa)). N-linked (GlcNAc...) asparagine glycans are attached at residues N84, N109, and N121. Residues 184–204 (LWVAFLCWLLANVMLSMPVLV) traverse the membrane as a helical segment. Residues 205–206 (YG) are Cytoplasmic-facing. The chain crosses the membrane as a helical span at residues 207–227 (GYMLLATGIFQLLALLFFSMA). Residues 228–249 (TSLTSPCPLHLGASVLHTHHGP) are Extracellular-facing. Residues 250–270 (AFWITLTTGLLCVLLGLAMAV) form a helical membrane-spanning segment. Residues 271 to 343 (AHRMQPHRLK…AHPKDPDCAL (73 aa)) are Cytoplasmic-facing. The disordered stretch occupies residues 306–343 (RYRSMADSPKSQDIPLSEASSTKAYCKEAHPKDPDCAL). Basic and acidic residues predominate over residues 330–343 (YCKEAHPKDPDCAL).

Belongs to the DUOXA family. In terms of assembly, may interact with NUMB. Specifically expressed in thyroid gland. Also detected in esophagus.

Its subcellular location is the membrane. Its function is as follows. May be required for the maturation and the transport from the endoplasmic reticulum to the plasma membrane of functional DUOX1. The polypeptide is Dual oxidase maturation factor 1 (DUOXA1) (Homo sapiens (Human)).